A 467-amino-acid chain; its full sequence is Glutamate--tRNA ligase (467 aa).

The short motif at Pro9 to Gly19 is the 'HIGH' region element. Residues Lys237–Arg241 carry the 'KMSKS' region motif. Lys240 serves as a coordination point for ATP.

Belongs to the class-I aminoacyl-tRNA synthetase family. Glutamate--tRNA ligase type 1 subfamily. Monomer.

It is found in the cytoplasm. It carries out the reaction tRNA(Glu) + L-glutamate + ATP = L-glutamyl-tRNA(Glu) + AMP + diphosphate. Its function is as follows. Catalyzes the attachment of glutamate to tRNA(Glu) in a two-step reaction: glutamate is first activated by ATP to form Glu-AMP and then transferred to the acceptor end of tRNA(Glu). The polypeptide is Glutamate--tRNA ligase (Xanthomonas axonopodis pv. citri (strain 306)).